A 699-amino-acid chain; its full sequence is Kinesin-like protein KIF3A (699 aa).

Positions 14–345 (NVKVVVRCRP…LRYANRAKNI (332 aa)) constitute a Kinesin motor domain. Position 100–107 (100–107 (GQTGTGKT)) interacts with ATP. A coiled-coil region spans residues 355–590 (PKDALLRQFQ…LSRELRLQML (236 aa)). 2 disordered regions span residues 372-421 (KKLE…KMIE) and 663-699 (SLMKLERPRTSKGKARPKTGRRKRSAKPETVIDSLLQ). A compositionally biased stretch (acidic residues) spans 376–400 (EGEEISGSDISGSEEDDDEEGEVGE). The span at 672-687 (TSKGKARPKTGRRKRS) shows a compositional bias: basic residues. Serine 687 carries the post-translational modification Phosphoserine. The segment at 697 to 699 (LLQ) is globular.

This sequence belongs to the TRAFAC class myosin-kinesin ATPase superfamily. Kinesin family. Kinesin II subfamily. In terms of assembly, heterodimer of KIF3A and KIF3B. Interacts with CIMAP3. Interacts with CLN3. Interacts with DCTN1. Interacts with FLCN. Interacts with AP3B1.

The protein resides in the cytoplasm. The protein localises to the cytoskeleton. It is found in the cell projection. Its subcellular location is the cilium. It localises to the microtubule organizing center. The protein resides in the centrosome. The protein localises to the centriole. Its function is as follows. Microtubule-based anterograde translocator for membranous organelles. Plus end-directed microtubule sliding activity in vitro. Plays a role in primary cilia formation. Plays a role in centriole cohesion and subdistal appendage organization and function. Regulates the formation of the subdistal appendage via recruitment of DCTN1 to the centriole. Also required for ciliary basal feet formation and microtubule anchoring to mother centriole. The chain is Kinesin-like protein KIF3A (KIF3A) from Homo sapiens (Human).